A 282-amino-acid polypeptide reads, in one-letter code: Bifunctional protein FolD (282 aa).

Residues 166–168 (GAS) and Ile-232 contribute to the NADP(+) site.

Belongs to the tetrahydrofolate dehydrogenase/cyclohydrolase family. Homodimer.

It carries out the reaction (6R)-5,10-methylene-5,6,7,8-tetrahydrofolate + NADP(+) = (6R)-5,10-methenyltetrahydrofolate + NADPH. The enzyme catalyses (6R)-5,10-methenyltetrahydrofolate + H2O = (6R)-10-formyltetrahydrofolate + H(+). It functions in the pathway one-carbon metabolism; tetrahydrofolate interconversion. Functionally, catalyzes the oxidation of 5,10-methylenetetrahydrofolate to 5,10-methenyltetrahydrofolate and then the hydrolysis of 5,10-methenyltetrahydrofolate to 10-formyltetrahydrofolate. The protein is Bifunctional protein FolD of Haemophilus influenzae (strain PittGG).